A 136-amino-acid chain; its full sequence is Putative pre-16S rRNA nuclease (136 aa).

Belongs to the YqgF nuclease family.

The protein localises to the cytoplasm. Functionally, could be a nuclease involved in processing of the 5'-end of pre-16S rRNA. This is Putative pre-16S rRNA nuclease from Francisella tularensis subsp. holarctica (strain FTNF002-00 / FTA).